The primary structure comprises 338 residues: Methionine import ATP-binding protein MetN 2 (338 aa).

The ABC transporter domain occupies 2-242 (IEIEKVCVDF…PQHAFTQQLV (241 aa)). 39-46 (GTSGAGKS) contacts ATP.

The protein belongs to the ABC transporter superfamily. Methionine importer (TC 3.A.1.24) family. As to quaternary structure, the complex is composed of two ATP-binding proteins (MetN), two transmembrane proteins (MetI) and a solute-binding protein (MetQ).

It is found in the cell inner membrane. It catalyses the reaction L-methionine(out) + ATP + H2O = L-methionine(in) + ADP + phosphate + H(+). It carries out the reaction D-methionine(out) + ATP + H2O = D-methionine(in) + ADP + phosphate + H(+). Part of the ABC transporter complex MetNIQ involved in methionine import. Responsible for energy coupling to the transport system. The polypeptide is Methionine import ATP-binding protein MetN 2 (Salmonella typhimurium (strain LT2 / SGSC1412 / ATCC 700720)).